The primary structure comprises 626 residues: tRNA 5-methylaminomethyl-2-thiouridine biosynthesis bifunctional protein MnmC (626 aa).

The segment at 1–237 (MKGPQLDYAD…KRDMTVGVFQ (237 aa)) is tRNA (mnm(5)s(2)U34)-methyltransferase. The interval 255–626 (IGSGLSGANV…RVLPNRFSQE (372 aa)) is FAD-dependent cmnm(5)s(2)U34 oxidoreductase.

It in the N-terminal section; belongs to the methyltransferase superfamily. tRNA (mnm(5)s(2)U34)-methyltransferase family. In the C-terminal section; belongs to the DAO family. It depends on FAD as a cofactor.

Its subcellular location is the cytoplasm. The catalysed reaction is 5-aminomethyl-2-thiouridine(34) in tRNA + S-adenosyl-L-methionine = 5-methylaminomethyl-2-thiouridine(34) in tRNA + S-adenosyl-L-homocysteine + H(+). Catalyzes the last two steps in the biosynthesis of 5-methylaminomethyl-2-thiouridine (mnm(5)s(2)U) at the wobble position (U34) in tRNA. Catalyzes the FAD-dependent demodification of cmnm(5)s(2)U34 to nm(5)s(2)U34, followed by the transfer of a methyl group from S-adenosyl-L-methionine to nm(5)s(2)U34, to form mnm(5)s(2)U34. This chain is tRNA 5-methylaminomethyl-2-thiouridine biosynthesis bifunctional protein MnmC, found in Hahella chejuensis (strain KCTC 2396).